The sequence spans 2335 residues: tRNA3(Ser)-specific nuclease WapA (2335 aa).

An N-terminal signal peptide occupies residues 1–32 (MKKRKRRTFKRFIAAFLVLSLMISLLPADVLA). Positions 36–81 (EEEAGNRIVSDDPEETPRNEQTEEAVPFPSKDINKEGEITSERTEN) are disordered. Basic and acidic residues predominate over residues 67-81 (DINKEGEITSERTEN). 5 YD repeats span residues 1032 to 1065 (YNDKNQLTAITDASGRKLTFTYDENGHVTSITGP), 1076 to 1103 (SDLLKKVTDTDGTVTSFDYDAEGRLVKQ), 1678 to 1716 (YDKEGNEVSKTIRAGADQTYKYEYDVMGKLVKTTDPLGN), 1898 to 1935 (YDANGNRTTINSSASGKVQYEYGKLNQLVKETHEDGTV), and 2082 to 2113 (YNAHGDVIAISDSSGKTLAKYQYDAWGNPTKT). 2 stretches are compositionally biased toward basic residues: residues 2251–2260 (KKDHGPKSKA) and 2269–2281 (SKFRSAKTLRRTT). The interval 2251–2285 (KKDHGPKSKARMPNGQPKSKFRSAKTLRRTTKATA) is disordered.

This sequence belongs to the RHS/WapA nuclease family.

Its subcellular location is the secreted. The protein resides in the cell wall. Toxic component of a toxin-immunity protein module, which functions as a cellular contact-dependent growth inhibition (CDI) system. A site-specific tRNA3(Ser) nuclease, the C-terminus (residues 2201-2335) probably removes 2 or 4 nucleotides from the 3' end of tRNA3(Ser) but not tRNA2(Arg) or tRNA(Glu) (upon expression in E.coli), possibly endonucleolytically. The nuclease activity is neutralized by expression of the cognate immunity protein WapI from the same strain, but not its homolog from 2 other B.subtilis strains. The C-terminus cannot be expressed on its own in E.coli, however it can be cloned in the presence of its cognate immunity protein gene wapI. Cell contact is probably necessary for growth inhibition. The protein is tRNA3(Ser)-specific nuclease WapA (wapA) of Bacillus spizizenii (strain DSM 15029 / JCM 12233 / NBRC 101239 / NRRL B-23049 / TU-B-10) (Bacillus subtilis subsp. spizizenii).